A 424-amino-acid polypeptide reads, in one-letter code: Serine--tRNA ligase (424 aa).

231-233 (TAE) is a binding site for L-serine. 262 to 264 (RAE) contacts ATP. Glu285 lines the L-serine pocket. Position 349–352 (349–352 (EISS)) interacts with ATP. Ser385 provides a ligand contact to L-serine.

This sequence belongs to the class-II aminoacyl-tRNA synthetase family. Type-1 seryl-tRNA synthetase subfamily. In terms of assembly, homodimer. The tRNA molecule binds across the dimer.

Its subcellular location is the cytoplasm. It catalyses the reaction tRNA(Ser) + L-serine + ATP = L-seryl-tRNA(Ser) + AMP + diphosphate + H(+). The enzyme catalyses tRNA(Sec) + L-serine + ATP = L-seryl-tRNA(Sec) + AMP + diphosphate + H(+). It functions in the pathway aminoacyl-tRNA biosynthesis; selenocysteinyl-tRNA(Sec) biosynthesis; L-seryl-tRNA(Sec) from L-serine and tRNA(Sec): step 1/1. Its function is as follows. Catalyzes the attachment of serine to tRNA(Ser). Is also able to aminoacylate tRNA(Sec) with serine, to form the misacylated tRNA L-seryl-tRNA(Sec), which will be further converted into selenocysteinyl-tRNA(Sec). The sequence is that of Serine--tRNA ligase from Geobacillus sp. (strain WCH70).